The primary structure comprises 78 residues: Probable [Fe-S]-dependent transcriptional repressor (78 aa).

Cysteine 56, cysteine 61, cysteine 64, and cysteine 70 together coordinate iron-sulfur cluster.

The protein belongs to the FeoC family.

May function as a transcriptional regulator that controls feoABC expression. The sequence is that of Probable [Fe-S]-dependent transcriptional repressor from Enterobacter sp. (strain 638).